Reading from the N-terminus, the 406-residue chain is Vacuole membrane protein 1 (406 aa).

Position 2 is an N-acetylalanine (alanine 2). At 2-43 (AENGQNCDQRRVAMNKEQYNGNFTDPSSVNEKKRRDREERQN) the chain is on the cytoplasmic side. Residues 44–63 (IVLWRQPLITLQYFSLETLV) traverse the membrane as a helical segment. The Extracellular portion of the chain corresponds to 64–77 (ILKEWTSKLWHRQS). Residues 78–98 (IVVSFLLLLAVLTATYYVEGA) form a helical membrane-spanning segment. The Cytoplasmic segment spans residues 99 to 109 (HQQYVQRIEKQ). The helical transmembrane segment at 110–130 (FLLYAYWIGLGILSSVGLGTG) threads the bilayer. Over 131–250 (LHTFLLYLGP…ASRAKLAVQN (120 aa)) the chain is Extracellular. The VTT domain stretch occupies residues 173–316 (GTEGTISLWS…FVIVAFSKHI (144 aa)). Residues 251–271 (LVQKVGFFGILACASIPNPLF) form a helical membrane-spanning segment. At 272–273 (DL) the chain is on the cytoplasmic side. A helical transmembrane segment spans residues 274 to 294 (AGITCGHFLVPFWTFFGATLI). Over 295-306 (GKAIIKMHIQKL) the chain is Extracellular. The helical transmembrane segment at 307-327 (FVIVAFSKHIVEQMVAFIGAV) threads the bilayer. The Cytoplasmic portion of the chain corresponds to 328 to 363 (PGIGPSLQKPFQEYLEAQRQKLHHRSEMGTPQGENW). Residues 364–384 (LSWMFEKLVVVMVCYFILSII) form a helical membrane-spanning segment. Topologically, residues 385–406 (NSMAQSYAKRIQQRLDPKEKTK) are extracellular.

This sequence belongs to the VMP1 family. As to quaternary structure, interacts with BECN1. Interacts with TJP1. Interacts with TP53INP2. Interacts with TMEM41B. Interacts with ATP2A2, PLN and SLN; competes with PLN and SLN to prevent them from forming an inhibitory complex with ATP2A2. Interacts with ATG2A.

The protein localises to the endoplasmic reticulum-Golgi intermediate compartment membrane. It is found in the cell membrane. The protein resides in the vacuole membrane. It localises to the endoplasmic reticulum membrane. The enzyme catalyses a 1,2-diacyl-sn-glycero-3-phospho-L-serine(in) = a 1,2-diacyl-sn-glycero-3-phospho-L-serine(out). It carries out the reaction cholesterol(in) = cholesterol(out). The catalysed reaction is a 1,2-diacyl-sn-glycero-3-phosphocholine(in) = a 1,2-diacyl-sn-glycero-3-phosphocholine(out). It catalyses the reaction a 1,2-diacyl-sn-glycero-3-phosphoethanolamine(in) = a 1,2-diacyl-sn-glycero-3-phosphoethanolamine(out). Its function is as follows. Phospholipid scramblase involved in lipid homeostasis and membrane dynamics processes. Has phospholipid scramblase activity toward cholesterol and phosphatidylserine, as well as phosphatidylethanolamine and phosphatidylcholine. Required for autophagosome formation: participates in early stages of autophagosome biogenesis at the endoplasmic reticulum (ER) membrane by reequilibrating the leaflets of the ER as lipids are extracted by ATG2 (ATG2A or ATG2B) to mediate autophagosome assembly. Regulates ATP2A2 activity to control ER-isolation membrane contacts for autophagosome formation. In addition to autophagy, involved in other processes in which phospholipid scramblase activity is required. Modulates ER contacts with lipid droplets, mitochondria and endosomes. Plays an essential role in formation of cell junctions. Upon stress such as bacterial and viral infection, promotes formation of cytoplasmic vacuoles followed by cell death. Involved in the cytoplasmic vacuolization of acinar cells during the early stage of acute pancreatitis. The sequence is that of Vacuole membrane protein 1 from Bos taurus (Bovine).